Reading from the N-terminus, the 422-residue chain is GTPase Obg (422 aa).

The region spanning 1 to 158 is the Obg domain; that stretch reads MFYDRARIFV…RWLDLELKLL (158 aa). The OBG-type G domain maps to 159–329; the sequence is ADVGLVGFPN…LVYRVSALLE (171 aa). GTP contacts are provided by residues 165–172, 190–194, 212–215, 282–285, and 310–312; these read GFPNAGKS, FTTIT, DIPG, NKMD, and SAV. Mg(2+) contacts are provided by S172 and T192. In terms of domain architecture, OCT spans 337 to 422; that stretch reads VPEALERPVI…IGDYEFEYVE (86 aa).

It belongs to the TRAFAC class OBG-HflX-like GTPase superfamily. OBG GTPase family. Monomer. Requires Mg(2+) as cofactor.

The protein resides in the cytoplasm. Functionally, an essential GTPase which binds GTP, GDP and possibly (p)ppGpp with moderate affinity, with high nucleotide exchange rates and a fairly low GTP hydrolysis rate. Plays a role in control of the cell cycle, stress response, ribosome biogenesis and in those bacteria that undergo differentiation, in morphogenesis control. The chain is GTPase Obg from Pelotomaculum thermopropionicum (strain DSM 13744 / JCM 10971 / SI).